A 412-amino-acid polypeptide reads, in one-letter code: Nucleoside transporter 1 (412 aa).

The disordered stretch occupies residues 1 to 21 (MSKIKESSSGILGASNNTNKE). The Cytoplasmic portion of the chain corresponds to 1–29 (MSKIKESSSGILGASNNTNKESSQKSARS). Residues 7-21 (SSSGILGASNNTNKE) are compositionally biased toward polar residues. Residues 30–50 (IALPMTYALIGVSCLNVWNSA) form a helical membrane-spanning segment. Topologically, residues 51-56 (LGLNIK) are extracellular. A helical membrane pass occupies residues 57 to 77 (ITYNIFQMAGLLTSSVLALFV). The Cytoplasmic segment spans residues 78–81 (NYPR). Residues 82-102 (VLLPTSLGVLTLLCAGFQIAH) form a helical membrane-spanning segment. At 103–114 (QTFSDSAFDTYC) the chain is on the extracellular side. Residues 115-135 (LAAFITIGLMAGIAQTIAFAI) form a helical membrane-spanning segment. The Cytoplasmic segment spans residues 136–144 (GTTKESNMS). The chain crosses the membrane as a helical span at residues 145 to 165 (GYISAGIGMSGVLIFCINLIL). Over 166-181 (DYIVSDEKIYEINKSK) the chain is Extracellular. Residues 182–202 (LLCLFSISEIFLIITIVCCVL) form a helical membrane-spanning segment. Topologically, residues 203 to 240 (YIDLFPKNDNNKDSTDIEKAEEKEGRLPLIEIIKDGYK) are cytoplasmic. A helical membrane pass occupies residues 241 to 261 (AILSIFLVNWLSLQLFPGIGH). The Extracellular portion of the chain corresponds to 262-271 (KKWQEKHGMT). Residues 272–294 (DNNVTIIVGMFQVFDFISRYPPN) form a helical membrane-spanning segment. Residues 295–310 (FTHIKIFKYFTFSLNT) are Cytoplasmic-facing. Residues 311–331 (LLIGNFLRLLFIPWFVLNAVI) traverse the membrane as a helical segment. Topologically, residues 332 to 343 (SSSFFTNIVQQC) are extracellular. The helical transmembrane segment at 344–364 (VCIAALAFTNGWFNTVPFIVF) threads the bilayer. Topologically, residues 365–382 (VKELKKVKHQKDIETISR) are cytoplasmic. The chain crosses the membrane as a helical span at residues 383–403 (IMVVSLFFGLFFGMLTTCLYD). Residues 404-412 (YFPIGILNN) are Extracellular-facing.

It belongs to the SLC29A/ENT transporter (TC 2.A.57) family.

It is found in the cell membrane. It carries out the reaction inosine(in) = inosine(out). The catalysed reaction is adenosine(in) = adenosine(out). The enzyme catalyses hypoxanthine(out) = hypoxanthine(in). It catalyses the reaction guanosine(in) = guanosine(out). It carries out the reaction guanine(out) = guanine(in). The catalysed reaction is thymidine(in) = thymidine(out). The enzyme catalyses uridine(out) = uridine(in). It catalyses the reaction uracil(in) = uracil(out). It carries out the reaction thymine(out) = thymine(in). The catalysed reaction is adenine(out) = adenine(in). The enzyme catalyses cytosine(out) = cytosine(in). It catalyses the reaction xanthine(out) = xanthine(in). Nucleoside and nucleobase transporter with a broad substrate specificity. The sequence is that of Nucleoside transporter 1 from Plasmodium berghei (strain Anka).